A 125-amino-acid polypeptide reads, in one-letter code: MPTINQLVRQGREVETTKSKSPAMQNSPQRRGVCTRVYTTTPKKPNSALRKVAKVRLTNGFEVISYIGGEGHNLQEHSVVLVRGGRVKDLPGVRYHIVRGSLDLQGVKDRKQARSKYGAKKPKAK.

The tract at residues Met-1–Arg-31 is disordered. The segment covering Ser-19 to Gln-29 has biased composition (polar residues). Position 89 is a 3-methylthioaspartic acid (Asp-89).

Belongs to the universal ribosomal protein uS12 family. In terms of assembly, part of the 30S ribosomal subunit. Contacts proteins S8 and S17. May interact with IF1 in the 30S initiation complex.

In terms of biological role, with S4 and S5 plays an important role in translational accuracy. Functionally, interacts with and stabilizes bases of the 16S rRNA that are involved in tRNA selection in the A site and with the mRNA backbone. Located at the interface of the 30S and 50S subunits, it traverses the body of the 30S subunit contacting proteins on the other side and probably holding the rRNA structure together. The combined cluster of proteins S8, S12 and S17 appears to hold together the shoulder and platform of the 30S subunit. This Paracidovorax citrulli (strain AAC00-1) (Acidovorax citrulli) protein is Small ribosomal subunit protein uS12.